A 291-amino-acid polypeptide reads, in one-letter code: Sulfotransferase 1A1 (291 aa).

44–49 lines the 3'-phosphoadenylyl sulfate pocket; sequence KSGTTW. 102 to 104 serves as a coordination point for substrate; the sequence is KTH. His-104 serves as the catalytic Proton acceptor. Residues Arg-126, Ser-134, Tyr-189, 223 to 228, and 251 to 255 each bind 3'-phosphoadenylyl sulfate; these read TSFKKM and FMRKG. Position 134 is a phosphoserine (Ser-134).

Belongs to the sulfotransferase 1 family. Homodimer. Post-translationally, the N-terminus is blocked. Liver, kidney, heart and colon.

The protein resides in the cytoplasm. It carries out the reaction a phenol + 3'-phosphoadenylyl sulfate = an aryl sulfate + adenosine 3',5'-bisphosphate + H(+). It catalyses the reaction 17beta-estradiol + 3'-phosphoadenylyl sulfate = 17beta-estradiol 3-sulfate + adenosine 3',5'-bisphosphate + H(+). The enzyme catalyses 4-ethylphenol + 3'-phosphoadenylyl sulfate = 4-ethylphenyl sulfate + adenosine 3',5'-bisphosphate + H(+). The catalysed reaction is 4-nitrophenol + 3'-phosphoadenylyl sulfate = 4-nitrophenyl sulfate + adenosine 3',5'-bisphosphate. It carries out the reaction dopamine + 3'-phosphoadenylyl sulfate = dopamine 3-O-sulfate + adenosine 3',5'-bisphosphate + H(+). It catalyses the reaction dopamine + 3'-phosphoadenylyl sulfate = dopamine 4-O-sulfate + adenosine 3',5'-bisphosphate + H(+). The enzyme catalyses 3,3',5-triiodo-L-thyronine + 3'-phosphoadenylyl sulfate = 3,3',5-triiodo-L-thyronine sulfate + adenosine 3',5'-bisphosphate + H(+). The catalysed reaction is 3,3',5'-triiodo-L-thyronine + 3'-phosphoadenylyl sulfate = 3,3',5'-triiodo-L-thyronine sulfate + adenosine 3',5'-bisphosphate + H(+). It carries out the reaction 3,3'-diiodo-L-thyronine + 3'-phosphoadenylyl sulfate = 3,3'-diiodo-L-thyronine sulfate + adenosine 3',5'-bisphosphate + H(+). It catalyses the reaction L-thyroxine + 3'-phosphoadenylyl sulfate = L-thyroxine sulfate + adenosine 3',5'-bisphosphate + H(+). Functionally, sulfotransferase that utilizes 3'-phospho-5'-adenylyl sulfate (PAPS) as sulfonate donor to catalyze the sulfate conjugation of a wide variety of acceptor molecules bearing a hydroxyl or an amine group. Sulfonation increases the water solubility of most compounds, and therefore their renal excretion, but it can also result in bioactivation to form active metabolites. Displays broad substrate specificity for small phenolic compounds. Plays an important roles in the sulfonation of endogenous molecules such as steroid hormones. Mediates the sulfate conjugation of a variety of xenobiotics, including the drugs acetaminophen and minoxidil. Mediates also the metabolic activation of carcinogenic N-hydroxyarylamines leading to highly reactive intermediates capable of forming DNA adducts, potentially resulting in mutagenesis. May play a role in gut microbiota-host metabolic interaction. O-sulfonates 4-ethylphenol (4-EP), a dietary tyrosine-derived metabolite produced by gut bacteria. The product 4-EPS crosses the blood-brain barrier and may negatively regulate oligodendrocyte maturation and myelination, affecting the functional connectivity of different brain regions associated with the limbic system. Catalyzes the sulfate conjugation of dopamine. Catalyzes the sulfation of T4 (L-thyroxine/3,5,3',5'-tetraiodothyronine), T3 (3,5,3'-triiodothyronine), rT3 (3,3',5'-triiodothyronine) and 3,3'-T2 (3,3'-diiodothyronine), with a substrate preference of 3,3'-T2 &gt; rT3 &gt; T3 &gt; T4. In Rattus norvegicus (Rat), this protein is Sulfotransferase 1A1 (Sult1a1).